A 192-amino-acid polypeptide reads, in one-letter code: tRNA (pseudouridine(54)-N(1))-methyltransferase (192 aa).

The S-adenosyl-L-methionine site is built by leucine 114 and glycine 138.

The protein belongs to the methyltransferase superfamily. TrmY family. Homodimer.

The protein resides in the cytoplasm. The catalysed reaction is pseudouridine(54) in tRNA + S-adenosyl-L-methionine = N(1)-methylpseudouridine(54) in tRNA + S-adenosyl-L-homocysteine + H(+). In terms of biological role, specifically catalyzes the N1-methylation of pseudouridine at position 54 (Psi54) in tRNAs. The sequence is that of tRNA (pseudouridine(54)-N(1))-methyltransferase from Aeropyrum pernix (strain ATCC 700893 / DSM 11879 / JCM 9820 / NBRC 100138 / K1).